The primary structure comprises 291 residues: Probable cell wall amidase LytH (291 aa).

Positions 1-40 (MKKIDSWLTKHGLKNRLTLVVIVIFIIFLILLFMFVNLSD) are cleaved as a signal peptide. The region spanning 41–105 (EDTGQITITE…WVAGWHTNLN (65 aa)) is the SH3b domain. The 165-residue stretch at 122 to 286 (IVLDPGHGGS…VEQAIVDGLK (165 aa)) folds into the MurNAc-LAA domain. The disordered stretch occupies residues 123–147 (VLDPGHGGSDQGASSSTPSKSLEKN). Over residues 133–142 (QGASSSTPSK) the composition is skewed to polar residues.

This sequence belongs to the N-acetylmuramoyl-L-alanine amidase 3 family.

It is found in the secreted. Its function is as follows. Probably involved in cell-wall metabolism. This chain is Probable cell wall amidase LytH (lytH), found in Staphylococcus epidermidis (strain ATCC 12228 / FDA PCI 1200).